Reading from the N-terminus, the 263-residue chain is Glutamate/glutamine/aspartate/asparagine transport ATP-binding protein BztD (263 aa).

In terms of domain architecture, ABC transporter spans 23–257 (IQISQMNKWY…PQSERTKQFL (235 aa)). An ATP-binding site is contributed by 55 to 62 (GPSGSGKS).

It belongs to the ABC transporter superfamily. In terms of assembly, bztB and BztC form a heterodimer which can form a membrane complex with a homodimer of BztD.

The protein resides in the cell membrane. In terms of biological role, part of a binding-protein-dependent transport system for glutamate, glutamine, aspartate, asparagine. Probably responsible for energy coupling to the transport system. The sequence is that of Glutamate/glutamine/aspartate/asparagine transport ATP-binding protein BztD (bztD) from Rhodobacter capsulatus (strain ATCC BAA-309 / NBRC 16581 / SB1003).